We begin with the raw amino-acid sequence, 185 residues long: uncharacterized protein (185 aa).

Residues 39 to 177 (LWHASAGVLV…SWPFVPDSRA (139 aa)) enclose the Nudix hydrolase domain. The Nudix box signature appears at 77–99 (GGVVDPGETPQETAIREVGEELG). Glu93 and Glu97 together coordinate Mg(2+).

The protein belongs to the Nudix hydrolase family. The cofactor is Mg(2+).

This is an uncharacterized protein from Rhodococcus erythropolis (Arthrobacter picolinophilus).